Here is a 278-residue protein sequence, read N- to C-terminus: Large ribosomal subunit protein uL2 (278 aa).

2 disordered regions span residues 29–57 and 224–278; these read PEKSLVRPLHSKGGRNNAGRVTVRHQGGG and VAMN…NKKR. Over residues 258–278 the composition is skewed to basic residues; sequence RSPKKASNKYIVRRRKTNKKR.

It belongs to the universal ribosomal protein uL2 family. In terms of assembly, part of the 50S ribosomal subunit. Forms a bridge to the 30S subunit in the 70S ribosome.

Functionally, one of the primary rRNA binding proteins. Required for association of the 30S and 50S subunits to form the 70S ribosome, for tRNA binding and peptide bond formation. It has been suggested to have peptidyltransferase activity; this is somewhat controversial. Makes several contacts with the 16S rRNA in the 70S ribosome. This is Large ribosomal subunit protein uL2 from Streptomyces griseus subsp. griseus (strain JCM 4626 / CBS 651.72 / NBRC 13350 / KCC S-0626 / ISP 5235).